The chain runs to 242 residues: Biosynthetic peptidoglycan transglycosylase (242 aa).

The helical transmembrane segment at 19–39 threads the bilayer; sequence ILAALAVFWGGGIALFSVVPV.

This sequence belongs to the glycosyltransferase 51 family.

The protein resides in the cell inner membrane. The catalysed reaction is [GlcNAc-(1-&gt;4)-Mur2Ac(oyl-L-Ala-gamma-D-Glu-L-Lys-D-Ala-D-Ala)](n)-di-trans,octa-cis-undecaprenyl diphosphate + beta-D-GlcNAc-(1-&gt;4)-Mur2Ac(oyl-L-Ala-gamma-D-Glu-L-Lys-D-Ala-D-Ala)-di-trans,octa-cis-undecaprenyl diphosphate = [GlcNAc-(1-&gt;4)-Mur2Ac(oyl-L-Ala-gamma-D-Glu-L-Lys-D-Ala-D-Ala)](n+1)-di-trans,octa-cis-undecaprenyl diphosphate + di-trans,octa-cis-undecaprenyl diphosphate + H(+). It participates in cell wall biogenesis; peptidoglycan biosynthesis. Functionally, peptidoglycan polymerase that catalyzes glycan chain elongation from lipid-linked precursors. The polypeptide is Biosynthetic peptidoglycan transglycosylase (Salmonella paratyphi A (strain ATCC 9150 / SARB42)).